The following is a 209-amino-acid chain: Ion-translocating oxidoreductase complex subunit G (209 aa).

The chain crosses the membrane as a helical span at residues 9-29; it reads ATTLALFAASTTAVTAVVNML. At T175 the chain carries FMN phosphoryl threonine.

The protein belongs to the RnfG family. The complex is composed of six subunits: RnfA, RnfB, RnfC, RnfD, RnfE and RnfG. The cofactor is FMN.

Its subcellular location is the cell inner membrane. Functionally, part of a membrane-bound complex that couples electron transfer with translocation of ions across the membrane. The polypeptide is Ion-translocating oxidoreductase complex subunit G (Pectobacterium atrosepticum (strain SCRI 1043 / ATCC BAA-672) (Erwinia carotovora subsp. atroseptica)).